We begin with the raw amino-acid sequence, 128 residues long: Large ribosomal subunit protein bL19 (128 aa).

This sequence belongs to the bacterial ribosomal protein bL19 family.

In terms of biological role, this protein is located at the 30S-50S ribosomal subunit interface and may play a role in the structure and function of the aminoacyl-tRNA binding site. This chain is Large ribosomal subunit protein bL19, found in Bradyrhizobium sp. (strain ORS 278).